Reading from the N-terminus, the 187-residue chain is Probable cobalt-precorrin-6B C(15)-methyltransferase (decarboxylating) (187 aa).

S-adenosyl-L-methionine-binding positions include T17, 41–45, D62, and G91; that span reads GCGTG.

This sequence belongs to the methyltransferase superfamily. Archaeal-type CbiT family.

It catalyses the reaction Co-precorrin-6B + S-adenosyl-L-methionine = Co-precorrin-7 + S-adenosyl-L-homocysteine + CO2. The protein operates within cofactor biosynthesis; adenosylcobalamin biosynthesis; cob(II)yrinate a,c-diamide from sirohydrochlorin (anaerobic route): step 8/10. In terms of biological role, catalyzes the methylation of C-15 in cobalt-precorrin-6B followed by the decarboxylation of C-12 to form cobalt-precorrin-7. This is Probable cobalt-precorrin-6B C(15)-methyltransferase (decarboxylating) from Methanobrevibacter smithii (strain ATCC 35061 / DSM 861 / OCM 144 / PS).